The following is a 173-amino-acid chain: Tumor necrosis factor ligand superfamily member 18 (173 aa).

Residues 1 to 20 are Cytoplasmic-facing; sequence MEEMPLRESSPQRAERCKKS. Residues 21-41 form a helical; Signal-anchor for type II membrane protein membrane-spanning segment; the sequence is WLLCIVALLLMLLCSLGTLIY. A THD domain is found at 40–166; the sequence is IYTSLKPTAI…TNTYWGIILM (127 aa). The Extracellular portion of the chain corresponds to 42–173; it reads TSLKPTAIES…ILMPDLPFIS (132 aa). The cysteines at positions 52 and 72 are disulfide-linked. N-linked (GlcNAc...) asparagine glycosylation occurs at Asn74.

The protein belongs to the tumor necrosis factor family. Homotrimer. Homodimer. Post-translationally, N-glycosylated. In terms of tissue distribution, detected in immature and mature dendritic cells and in macrophages (at protein level). Detected in spleen, lung, heart, thymus, monocytes, macrophages, B-cells and dendritic cells.

The protein resides in the cell membrane. Its function is as follows. Cytokine that binds to TNFRSF18/AITR/GITR. Regulates T-cell responses. Can function as costimulator and lower the threshold for T-cell activation and T-cell proliferation. Important for interactions between activated T-lymphocytes and endothelial cells. Mediates activation of NF-kappa-B. Triggers increased phosphorylation of STAT1 and up-regulates expression of VCAM1 and ICAM1. Promotes leukocyte adhesion to endothelial cells. Regulates migration of monocytes from the splenic reservoir to sites of inflammation. The sequence is that of Tumor necrosis factor ligand superfamily member 18 (Tnfsf18) from Mus musculus (Mouse).